The primary structure comprises 365 residues: Phospho-N-acetylmuramoyl-pentapeptide-transferase (365 aa).

A run of 9 helical transmembrane segments spans residues 19 to 39, 47 to 67, 91 to 111, 115 to 135, 155 to 175, 184 to 204, 224 to 244, 281 to 301, and 344 to 364; these read LLIL…WLLT, AVIL…FGVI, AGTP…VALI, FDPQ…IGWV, LLLQ…TGSP, GNLI…VLVA, AIAF…LMIF, AVGL…IFFV, and TQIV…GFIS.

It belongs to the glycosyltransferase 4 family. MraY subfamily. It depends on Mg(2+) as a cofactor.

The protein resides in the cell inner membrane. It carries out the reaction UDP-N-acetyl-alpha-D-muramoyl-L-alanyl-gamma-D-glutamyl-meso-2,6-diaminopimeloyl-D-alanyl-D-alanine + di-trans,octa-cis-undecaprenyl phosphate = di-trans,octa-cis-undecaprenyl diphospho-N-acetyl-alpha-D-muramoyl-L-alanyl-D-glutamyl-meso-2,6-diaminopimeloyl-D-alanyl-D-alanine + UMP. It participates in cell wall biogenesis; peptidoglycan biosynthesis. In terms of biological role, catalyzes the initial step of the lipid cycle reactions in the biosynthesis of the cell wall peptidoglycan: transfers peptidoglycan precursor phospho-MurNAc-pentapeptide from UDP-MurNAc-pentapeptide onto the lipid carrier undecaprenyl phosphate, yielding undecaprenyl-pyrophosphoryl-MurNAc-pentapeptide, known as lipid I. The chain is Phospho-N-acetylmuramoyl-pentapeptide-transferase from Gloeothece citriformis (strain PCC 7424) (Cyanothece sp. (strain PCC 7424)).